The primary structure comprises 392 residues: NADH-quinone oxidoreductase subunit D 1 (392 aa).

It belongs to the complex I 49 kDa subunit family. As to quaternary structure, NDH-1 is composed of 14 different subunits. Subunits NuoB, C, D, E, F, and G constitute the peripheral sector of the complex.

Its subcellular location is the cell inner membrane. The catalysed reaction is a quinone + NADH + 5 H(+)(in) = a quinol + NAD(+) + 4 H(+)(out). In terms of biological role, NDH-1 shuttles electrons from NADH, via FMN and iron-sulfur (Fe-S) centers, to quinones in the respiratory chain. The immediate electron acceptor for the enzyme in this species is believed to be a menaquinone. Couples the redox reaction to proton translocation (for every two electrons transferred, four hydrogen ions are translocated across the cytoplasmic membrane), and thus conserves the redox energy in a proton gradient. The protein is NADH-quinone oxidoreductase subunit D 1 of Cytophaga hutchinsonii (strain ATCC 33406 / DSM 1761 / CIP 103989 / NBRC 15051 / NCIMB 9469 / D465).